Consider the following 843-residue polypeptide: Ribosome biogenesis protein ERB1 (843 aa).

2 disordered regions span residues Lys-36 to Tyr-189 and Ala-364 to Leu-419. 3 stretches are compositionally biased toward acidic residues: residues Val-77 to Glu-92, Ser-106 to Ser-139, and Glu-163 to Glu-172. Positions Pro-173–Gly-183 are enriched in basic and acidic residues. Over residues Pro-379–Tyr-396 the composition is skewed to pro residues. A compositionally biased stretch (basic and acidic residues) spans Leu-397–Trp-406. 6 WD repeats span residues Gly-487–Ser-526, Ser-530–Glu-570, Lys-668–Ile-706, Pro-709–Lys-754, Tyr-758–Ser-797, and Thr-813–Met-843.

It belongs to the WD repeat BOP1/ERB1 family. Component of the NOP7 complex, composed of ERB1, NOP7 and YTM1. The complex is held together by ERB1, which interacts with NOP7 via its N-terminal domain and with YTM1 via a high-affinity interaction between the seven-bladed beta-propeller domains of the 2 proteins. The NOP7 complex associates with the 66S pre-ribosome.

It is found in the nucleus. Its subcellular location is the nucleolus. It localises to the nucleoplasm. Component of the NOP7 complex, which is required for maturation of the 25S and 5.8S ribosomal RNAs and formation of the 60S ribosome. This is Ribosome biogenesis protein ERB1 from Coccidioides immitis (strain RS) (Valley fever fungus).